The chain runs to 86 residues: Small ribosomal subunit protein uS15c (86 aa).

Belongs to the universal ribosomal protein uS15 family. As to quaternary structure, part of the 30S ribosomal subunit.

It is found in the plastid. The protein is Small ribosomal subunit protein uS15c (rps15) of Cuscuta gronovii (Common dodder).